The following is a 481-amino-acid chain: 4-O-methyl-glucuronoyl methylesterase (481 aa).

The first 21 residues, 1 to 21 (MVSQTVVSSLLVVLGAAGVRA), serve as a signal peptide directing secretion. In terms of domain architecture, CBM1 spans 23-59 (QRQSLWGQCGGSGWSGPTLCVDGAWCNPQNQWYHQCI). 3 disulfide bridges follow: Cys108–Cys143, Cys292–Cys428, and Cys324–Cys400. A GXSYXG catalytic site motif motif is present at residues 291 to 296 (GCSRNG). Ser293 (nucleophile) is an active-site residue. Lys297, Gln339, Glu347, and Trp391 together coordinate substrate. His427 (proton donor/acceptor) is an active-site residue.

It belongs to the carbohydrate esterase 15 (CE15) family.

The protein localises to the secreted. The catalysed reaction is a 4-O-methyl-alpha-D-glucuronosyl ester derivative + H2O = 4-O-methyl-alpha-D-glucuronate derivative + an alcohol + H(+). In terms of biological role, glucuronoyl esterase which may play a significant role in biomass degradation, as it is considered to disconnect hemicellulose from lignin through the hydrolysis of the ester bond between 4-O-methyl-D-glucuronic acid residues of glucuronoxylans and aromatic alcohols of lignin. This is 4-O-methyl-glucuronoyl methylesterase from Podospora anserina (strain S / ATCC MYA-4624 / DSM 980 / FGSC 10383) (Pleurage anserina).